The sequence spans 590 residues: METGNVVNAQPELSGIIDGSKSYMYEQLWKLCAGPLCDIPKLGENVYYFPQGNIELVDASTREELNELQPICDLPSKLQCRVIAIHLKVENNSDETYAEITLMPDTTQVVIPTQSENQFRPLVNSFTKVLTASDTSAYGGFFVPKKHAIECLPPLPLPAQELLAKDLHGNQWRFRHSYRGTPQRHSLTTGWNEFTTSKKLVKGDVIVFVRGETGELRVGIRRARHQQGNIPSSIVSIDCMRHGVIASAKHALDNQCIFIVVYKPSIRSSQFIVSYDKFLDAMNNKFIVGSRFTMRFEGDDFSERRYFGTIIGVNDFSPHWKCSEWRSLEVQWDEFASFSRPNKVSPWEIEHLMSALNVPRSSLLKNKRLREVNEFGQEIGQLSVASPMNTSLRYRDTTEDAMNPSRLLMSYPVQPMPKLNYNNQMVTQIEENITTKAVTNFRLFGVSLAIPLVIKDPIEEIGSDISKLTEGKKFGQSQTLRSPIEIQSKQFGSTRTCTKVQMQGVTIGRAVDLSVLNGYDQLILELEKLFDLKGQLQTRNQWKIAFTDSDGYEMLVGDDPWPEFCKMVKKILIYSKEEVKNLKSSKSLSS.

Residues 126 to 224 (FTKVLTASDT…ELRVGIRRAR (99 aa)) constitute a DNA-binding region (TF-B3). In terms of domain architecture, PB1 spans 495-576 (RTCTKVQMQG…MVKKILIYSK (82 aa)).

It belongs to the ARF family. As to quaternary structure, homodimers and heterodimers.

It localises to the nucleus. Functionally, auxin response factors (ARFs) are transcriptional factors that bind specifically to the DNA sequence 5'-TGTCTC-3' found in the auxin-responsive promoter elements (AuxREs). Could act as transcriptional activator or repressor. Formation of heterodimers with Aux/IAA proteins may alter their ability to modulate early auxin response genes expression. This Arabidopsis thaliana (Mouse-ear cress) protein is Auxin response factor 20 (ARF20).